The primary structure comprises 68 residues: Large ribosomal subunit protein uL29 (68 aa).

Belongs to the universal ribosomal protein uL29 family.

This Streptococcus sanguinis (strain SK36) protein is Large ribosomal subunit protein uL29.